We begin with the raw amino-acid sequence, 476 residues long: DnaJ homolog subfamily C member 7 homolog (476 aa).

The interval 1-22 (MTEVETTHMNAGTESQQEPAEL) is disordered. Positions 7–18 (THMNAGTESQQE) are enriched in polar residues. TPR repeat units lie at residues 23 to 56 (AEKQ…GSDS), 59 to 92 (AIYY…KPDV), 143 to 176 (MSWM…NPKN), 177 to 210 (VEAL…DPDC), 223 to 256 (LENT…DPDN), 261 to 294 (AKLY…DSSY), and 295 to 328 (LKGL…DASD). Residues 349-414 (DHYKILGVSK…ESRRRFDSGV (66 aa)) form the J domain.

The protein resides in the cytoplasm. In Schizosaccharomyces pombe (strain 972 / ATCC 24843) (Fission yeast), this protein is DnaJ homolog subfamily C member 7 homolog.